Reading from the N-terminus, the 276-residue chain is Glucosamine-6-phosphate deaminase 2 (276 aa).

Asp-72 acts as the Proton acceptor; for enolization step in catalysis. Residues 106–130 (ILDGNATDLQAECDAFEKKIKEAGG) are a coiled coil. Asp-141 serves as the catalytic For ring-opening step. The active-site Proton acceptor; for ring-opening step is the His-143. Residue Glu-148 is the For ring-opening step of the active site. Residue Thr-161 is modified to Phosphothreonine.

It belongs to the glucosamine/galactosamine-6-phosphate isomerase family. Homohexamer.

It is found in the cytoplasm. The catalysed reaction is alpha-D-glucosamine 6-phosphate + H2O = beta-D-fructose 6-phosphate + NH4(+). The protein operates within nucleotide-sugar biosynthesis; UDP-N-acetyl-alpha-D-glucosamine biosynthesis; alpha-D-glucosamine 6-phosphate from D-fructose 6-phosphate: step 1/1. With respect to regulation, allosterically activated by N-acetylglucosamine-6-phosphate (GlcNAc6P). Functionally, catalyzes the reversible conversion of alpha-D-glucosamine 6-phosphate (GlcN-6P) into beta-D-fructose 6-phosphate (Fru-6P) and ammonium ion, a regulatory reaction step in de novo uridine diphosphate-N-acetyl-alpha-D-glucosamine (UDP-GlcNAc) biosynthesis via hexosamine pathway. Deamination is coupled to aldo-keto isomerization mediating the metabolic flux from UDP-GlcNAc toward Fru-6P. At high ammonium level can drive amination and isomerization of Fru-6P toward hexosamines and UDP-GlcNAc synthesis. Has a role in fine tuning the metabolic fluctuations of cytosolic UDP-GlcNAc and their effects on hyaluronan synthesis that occur during tissue remodeling. This Bos taurus (Bovine) protein is Glucosamine-6-phosphate deaminase 2.